The primary structure comprises 205 residues: Small ribosomal subunit protein uS4 (205 aa).

The interval 20-46 (WGRSKSPVNRREYGPGQHGQRRKGKLS) is disordered. Residues 94-157 (RRLDAVVYRA…RQLTLVLEAS (64 aa)) enclose the S4 RNA-binding domain.

Belongs to the universal ribosomal protein uS4 family. In terms of assembly, part of the 30S ribosomal subunit. Contacts protein S5. The interaction surface between S4 and S5 is involved in control of translational fidelity.

One of the primary rRNA binding proteins, it binds directly to 16S rRNA where it nucleates assembly of the body of the 30S subunit. Its function is as follows. With S5 and S12 plays an important role in translational accuracy. The polypeptide is Small ribosomal subunit protein uS4 (Beijerinckia indica subsp. indica (strain ATCC 9039 / DSM 1715 / NCIMB 8712)).